The primary structure comprises 605 residues: MTSLTIPGLDQAPTTHARLLSWVREVAELTTPDRVVWCDGSQDEWQRLTEQLVEAGTFKRLEKKPNSFYAASDPSDVARVEERTFICSREEKDAGVTNYWMQPDEMKAIMTELYRGCMRGRTMYVIPFCMGPLDADKPKLGVEITDTAYVVVSMHIMTRMGSKVLERLGEDEDFVEALHSVGAPLEPGQQDVPWPCNDTKYITHFPEERKIWSFGSGYGGNALLGKKCFSLRIASAMARDEGWLAEHMLILKLISPEDKVHYVAAAFPSACGKTNLAMLQPTIPGWRVESLGDDIAWMRFGEDGRLYAVNPEAGFFGVAPGTNWKTNPNAMRTIDQGNSLFTNVALTDDGDVWWEEMEGEPQHLTDWKGRDWTPQSDEKAAHPNSRYCTPMSQCPILAPEWDDPNGVPISAILFGGRRKTTIPLVNEAFDWQHGVFMGATLSSEKTAAAAGKVGEVRRDPMAMLPFIGYNVGDYFQHWVNVGKEADSSKLPRIFYVNWFRRDESGKKIVWPGFGENSRVLKWIVERLDGNAAAEDTPIGRVPSADQIDLSGLDTPREDVETALHVDVEEWKAELPLIEEWFASIGDSLPSSMRDEFEALKQRLGA.

Substrate is bound by residues Arg79 and 218 to 220 (YGG). Lys227 and His247 together coordinate Mn(2+). Ser269 is a substrate binding site. Residue 270–275 (ACGKTN) participates in GTP binding. The active site involves Cys271. Residue Asp294 participates in Mn(2+) binding. Basic and acidic residues predominate over residues 364–381 (LTDWKGRDWTPQSDEKAA). The tract at residues 364 to 385 (LTDWKGRDWTPQSDEKAAHPNS) is disordered. 384–386 (NSR) provides a ligand contact to substrate. Residues Arg386, Arg417, and 513–516 (FGEN) each bind GTP.

It belongs to the phosphoenolpyruvate carboxykinase [GTP] family. As to quaternary structure, monomer. The cofactor is Mn(2+).

The protein localises to the cytoplasm. The catalysed reaction is oxaloacetate + GTP = phosphoenolpyruvate + GDP + CO2. The protein operates within carbohydrate biosynthesis; gluconeogenesis. Its function is as follows. Catalyzes the conversion of oxaloacetate (OAA) to phosphoenolpyruvate (PEP), the rate-limiting step in the metabolic pathway that produces glucose from lactate and other precursors derived from the citric acid cycle. This Saccharopolyspora erythraea (strain ATCC 11635 / DSM 40517 / JCM 4748 / NBRC 13426 / NCIMB 8594 / NRRL 2338) protein is Phosphoenolpyruvate carboxykinase [GTP].